Reading from the N-terminus, the 111-residue chain is Prostate and testis expressed protein 2 (111 aa).

The signal sequence occupies residues 1-18 (MFVLVMICLFCQYWGVLN). A UPAR/Ly6 domain is found at 27–108 (LLCYKCKKYH…CKHSNYCNLP (82 aa)). 4 disulfides stabilise this stretch: C29/C55, C32/C40, C47/C78, and C82/C99.

This sequence belongs to the PATE family. As to expression, expressed in prostate, testis, brain and lung.

The protein localises to the secreted. This is Prostate and testis expressed protein 2 (Pate2) from Mus musculus (Mouse).